The following is a 363-amino-acid chain: NAD(P)H-quinone oxidoreductase subunit 1, chloroplastic (363 aa).

6 consecutive transmembrane segments (helical) span residues 30-50 (LVPI…IVWL), 98-118 (FSIG…IIPF), 129-149 (IGVF…LMSG), 248-268 (YSGI…LVSS), 300-320 (VFGT…FLFI), and 336-356 (LLNL…LLTT).

This sequence belongs to the complex I subunit 1 family. NDH is composed of at least 16 different subunits, 5 of which are encoded in the nucleus.

It is found in the plastid. The protein resides in the chloroplast thylakoid membrane. The catalysed reaction is a plastoquinone + NADH + (n+1) H(+)(in) = a plastoquinol + NAD(+) + n H(+)(out). It catalyses the reaction a plastoquinone + NADPH + (n+1) H(+)(in) = a plastoquinol + NADP(+) + n H(+)(out). Its function is as follows. NDH shuttles electrons from NAD(P)H:plastoquinone, via FMN and iron-sulfur (Fe-S) centers, to quinones in the photosynthetic chain and possibly in a chloroplast respiratory chain. The immediate electron acceptor for the enzyme in this species is believed to be plastoquinone. Couples the redox reaction to proton translocation, and thus conserves the redox energy in a proton gradient. This chain is NAD(P)H-quinone oxidoreductase subunit 1, chloroplastic, found in Vitis vinifera (Grape).